The sequence spans 397 residues: t-SNARE affecting a late Golgi compartment protein 2 (397 aa).

Residues 1–317 lie on the Cytoplasmic side of the membrane; sequence MFRDRTNLFL…HYQKRTQKCK (317 aa). A coiled-coil region spans residues 74–96; that stretch reads DIAQDVDDYLLEVRRLSEQLAKV. Serine 109 is modified (phosphoserine). Residues 244-306 enclose the t-SNARE coiled-coil homology domain; sequence EAYLRERDEE…KSADKELNKA (63 aa). A helical; Anchor for type IV membrane protein membrane pass occupies residues 318 to 338; that stretch reads VILLLTLCVIALFFFVMLKPH. The Vesicular segment spans residues 339-397; sequence GGGSGGRNNGSNKYNNDDNKTVNNSHDDGSNTHINDEESNLPSIVEVTESENDALDDLL. The tract at residues 341–397 is disordered; sequence GSGGRNNGSNKYNNDDNKTVNNSHDDGSNTHINDEESNLPSIVEVTESENDALDDLL. Over residues 353-374 the composition is skewed to basic and acidic residues; the sequence is NNDDNKTVNNSHDDGSNTHIND. Over residues 386–397 the composition is skewed to acidic residues; that stretch reads TESENDALDDLL.

This sequence belongs to the syntaxin family. Interacts with VPS45.

It localises to the golgi apparatus. Its subcellular location is the trans-Golgi network membrane. It is found in the endosome membrane. In terms of biological role, t-SNARE that functions in transport from the endosome to the late Golgi and on the endocytic pathway. The protein is t-SNARE affecting a late Golgi compartment protein 2 (TLG2) of Saccharomyces cerevisiae (strain ATCC 204508 / S288c) (Baker's yeast).